A 482-amino-acid chain; its full sequence is Cardiolipin synthase (482 aa).

A run of 2 helical transmembrane segments spans residues 4–24 (LAYLLVILLILNVFFAAVTVF) and 34–54 (WAWLLVLTFVPIFGFIIYLIF). PLD phosphodiesterase domains lie at 217–244 (LNYRNHRKLAIIDGDVGYIGGFNIGDEY) and 395–422 (DNGFIHAKTLVVDGEIASVGTANMDFRS). Catalysis depends on residues His222, Lys224, Asp229, His400, Lys402, and Asp407.

The protein belongs to the phospholipase D family. Cardiolipin synthase subfamily.

It is found in the cell membrane. It catalyses the reaction 2 a 1,2-diacyl-sn-glycero-3-phospho-(1'-sn-glycerol) = a cardiolipin + glycerol. Its function is as follows. Catalyzes the reversible phosphatidyl group transfer from one phosphatidylglycerol molecule to another to form cardiolipin (CL) (diphosphatidylglycerol) and glycerol. This chain is Cardiolipin synthase (cls), found in Listeria innocua serovar 6a (strain ATCC BAA-680 / CLIP 11262).